We begin with the raw amino-acid sequence, 242 residues long: 1-(5-phosphoribosyl)-5-[(5-phosphoribosylamino)methylideneamino] imidazole-4-carboxamide isomerase (242 aa).

The Proton acceptor role is filled by aspartate 7. Aspartate 129 (proton donor) is an active-site residue.

This sequence belongs to the HisA/HisF family.

The protein resides in the cytoplasm. It catalyses the reaction 1-(5-phospho-beta-D-ribosyl)-5-[(5-phospho-beta-D-ribosylamino)methylideneamino]imidazole-4-carboxamide = 5-[(5-phospho-1-deoxy-D-ribulos-1-ylimino)methylamino]-1-(5-phospho-beta-D-ribosyl)imidazole-4-carboxamide. Its pathway is amino-acid biosynthesis; L-histidine biosynthesis; L-histidine from 5-phospho-alpha-D-ribose 1-diphosphate: step 4/9. The polypeptide is 1-(5-phosphoribosyl)-5-[(5-phosphoribosylamino)methylideneamino] imidazole-4-carboxamide isomerase (Pseudoalteromonas translucida (strain TAC 125)).